The sequence spans 496 residues: Glycerol kinase (496 aa).

Residue Thr-12 participates in ADP binding. ATP contacts are provided by Thr-12, Thr-13, and Ser-14. Thr-12 is a binding site for sn-glycerol 3-phosphate. Arg-16 provides a ligand contact to ADP. Sn-glycerol 3-phosphate contacts are provided by Arg-82, Glu-83, and Tyr-134. Residues Arg-82, Glu-83, and Tyr-134 each coordinate glycerol. Phosphohistidine; by HPr is present on His-230. Asp-244 contacts sn-glycerol 3-phosphate. The glycerol site is built by Asp-244 and Gln-245. Positions 266 and 309 each coordinate ADP. Thr-266, Gly-309, Gln-313, and Gly-410 together coordinate ATP. Residues Gly-410 and Asn-414 each coordinate ADP.

This sequence belongs to the FGGY kinase family. In terms of assembly, homotetramer and homodimer (in equilibrium). The phosphoenolpyruvate-dependent sugar phosphotransferase system (PTS), including enzyme I, and histidine-containing protein (HPr) are required for the phosphorylation, which leads to the activation of the enzyme.

The enzyme catalyses glycerol + ATP = sn-glycerol 3-phosphate + ADP + H(+). It participates in polyol metabolism; glycerol degradation via glycerol kinase pathway; sn-glycerol 3-phosphate from glycerol: step 1/1. Its activity is regulated as follows. Activated by phosphorylation and inhibited by fructose 1,6-bisphosphate (FBP). Functionally, key enzyme in the regulation of glycerol uptake and metabolism. Catalyzes the phosphorylation of glycerol to yield sn-glycerol 3-phosphate. In Bacillus cereus (strain G9842), this protein is Glycerol kinase.